A 216-amino-acid polypeptide reads, in one-letter code: Uracil phosphoribosyltransferase (216 aa).

5-phospho-alpha-D-ribose 1-diphosphate contacts are provided by residues R85, R110, and D135–S143. Residues I200 and G205 to A207 each bind uracil. D206 contacts 5-phospho-alpha-D-ribose 1-diphosphate.

This sequence belongs to the UPRTase family. The cofactor is Mg(2+).

It catalyses the reaction UMP + diphosphate = 5-phospho-alpha-D-ribose 1-diphosphate + uracil. It functions in the pathway pyrimidine metabolism; UMP biosynthesis via salvage pathway; UMP from uracil: step 1/1. Its activity is regulated as follows. Allosterically activated by GTP. Its function is as follows. Catalyzes the conversion of uracil and 5-phospho-alpha-D-ribose 1-diphosphate (PRPP) to UMP and diphosphate. The polypeptide is Uracil phosphoribosyltransferase (Ralstonia pickettii (strain 12J)).